The sequence spans 377 residues: Erythronate-4-phosphate dehydrogenase (377 aa).

Residues serine 45 and threonine 67 each contribute to the substrate site. Residues glutamine 127–valine 128, aspartate 147, and threonine 176 each bind NAD(+). Arginine 209 is an active-site residue. Aspartate 233 is a binding site for NAD(+). Residue glutamate 238 is part of the active site. Histidine 255 (proton donor) is an active-site residue. Glycine 258 is a binding site for NAD(+). Tyrosine 259 lines the substrate pocket.

This sequence belongs to the D-isomer specific 2-hydroxyacid dehydrogenase family. PdxB subfamily. In terms of assembly, homodimer.

Its subcellular location is the cytoplasm. The catalysed reaction is 4-phospho-D-erythronate + NAD(+) = (R)-3-hydroxy-2-oxo-4-phosphooxybutanoate + NADH + H(+). Its pathway is cofactor biosynthesis; pyridoxine 5'-phosphate biosynthesis; pyridoxine 5'-phosphate from D-erythrose 4-phosphate: step 2/5. Catalyzes the oxidation of erythronate-4-phosphate to 3-hydroxy-2-oxo-4-phosphonooxybutanoate. The sequence is that of Erythronate-4-phosphate dehydrogenase from Vibrio vulnificus (strain CMCP6).